The following is a 1611-amino-acid chain: SH3 domain-containing protein C23A1.17 (1611 aa).

Residues 3–67 (SFPTRVVALY…PKDFTEPAED (65 aa)) enclose the SH3 domain. Disordered stretches follow at residues 275–648 (THPA…PTSL), 662–741 (IDPP…PPGL), 762–851 (AVPR…NSLN), and 886–1365 (TPST…FSAK). A compositionally biased stretch (polar residues) spans 278-296 (AASSTMATESSHQSPSADS). The span at 300 to 312 (ELSKSQRVAKDDD) shows a compositional bias: basic and acidic residues. Residues 316–330 (VSNTANSDEPASSSK) show a composition bias toward polar residues. Composition is skewed to acidic residues over residues 361 to 373 (SEQE…DAES) and 387 to 420 (SEPE…QIDP). Positions 421–433 (EEAKRIALRERMA) are enriched in basic and acidic residues. Low complexity predominate over residues 472 to 494 (STTNDSSPPKDSSSTSTQPTEQS). Residues 576–586 (TQETSEQQVHK) show a composition bias toward polar residues. Residues 605–619 (FDKETLASNEAHEAV) are compositionally biased toward basic and acidic residues. The segment covering 637–648 (SSSVVTPSPTSL) has biased composition (low complexity). Composition is skewed to polar residues over residues 799-808 (SRPSTGSQLR), 886-902 (TPST…SNVA), and 923-940 (ATHQ…QLGS). Pro residues-rich tracts occupy residues 963–974 (PAAPPSIPPPLP), 1022–1053 (PPVP…PPVP), and 1076–1241 (IPAP…PVPA). Residues 1242-1278 (PSSEAPSVSTPRSSVPSPHSNASPSPTSSSMASAAPA) show a composition bias toward low complexity. Phosphoserine is present on residues Ser-1258, Ser-1261, and Ser-1266. Over residues 1300-1312 (KSSKSGEHHHHHN) the composition is skewed to basic residues. Residues 1317–1327 (DSSSTRTSLAH) are compositionally biased toward polar residues. Over residues 1340–1350 (RSSSRASKKPS) the composition is skewed to low complexity. Residues 1351 to 1362 (IVSTTGPFNESF) are compositionally biased toward polar residues. Position 1379 is a phosphoserine (Ser-1379). Position 1380 is a phosphothreonine (Thr-1380).

The protein localises to the cytoplasm. This Schizosaccharomyces pombe (strain 972 / ATCC 24843) (Fission yeast) protein is SH3 domain-containing protein C23A1.17.